Here is a 232-residue protein sequence, read N- to C-terminus: Beta-casein (232 aa).

The N-terminal stretch at 1 to 15 (MKLLILACFVALALA) is a signal peptide. N22 carries N-linked (GlcNAc...) asparagine glycosylation. S24 is subject to Phosphoserine. A Phosphothreonine modification is found at T27. Phosphoserine is present on residues S30, S32, S33, and S34. The span at 48–63 (KLKREEQQQTENERQN) shows a compositional bias: basic and acidic residues. The tract at residues 48 to 74 (KLKREEQQQTENERQNKIHQFPQPQPL) is disordered.

Belongs to the beta-casein family. As to expression, mammary gland specific. Secreted in milk.

It localises to the secreted. In terms of biological role, important role in determination of the surface properties of the casein micelles. This Sus scrofa (Pig) protein is Beta-casein (CSN2).